The sequence spans 526 residues: Methyltetrahydroprotoberberine 14-monooxygenase (526 aa).

A helical membrane pass occupies residues 14-34; that stretch reads LLLQYLQPISVALVVIALVWN. Position 468 (Cys468) interacts with heme.

It belongs to the cytochrome P450 family. Requires heme as cofactor. In terms of tissue distribution, mainly expressed in roots, and barely in stems, leaves and carpels.

The protein resides in the membrane. It carries out the reaction (S)-cis-N-methylcanadine + reduced [NADPH--hemoprotein reductase] + O2 = allocryptopine + oxidized [NADPH--hemoprotein reductase] + H2O + 2 H(+). The catalysed reaction is (S)-cis-N-methylstylopine + reduced [NADPH--hemoprotein reductase] + O2 = protopine + oxidized [NADPH--hemoprotein reductase] + H2O + 2 H(+). The enzyme catalyses (S)-cis-N-methyltetrahydrothalifendine + reduced [NADPH--hemoprotein reductase] + O2 = 7-hydroxy-8-methoxy-11-methyl-17,19-dioxa-11-azatetracyclo[12.7.0.0(4,9).0(16,20)]henicosa-1(21),4(9),5,7,14,16(20)-hexaen-2-one + oxidized [NADPH--hemoprotein reductase] + H2O + 2 H(+). It catalyses the reaction (S)-cis-N-methyltetrahydropalmatine + reduced [NADPH--hemoprotein reductase] + O2 = muramine + oxidized [NADPH--hemoprotein reductase] + H2O + 2 H(+). It participates in alkaloid biosynthesis. Its activity is regulated as follows. Repressed by cytochrome P450 inhibitors ketoconazole, metyrapone, prochloraz, ancymidol and cytochrome C. Its function is as follows. Involved in the biosynthesis of the isoquinoline alkaloid sanguinarine. Catalyzes the conversion of N-methylated protoberberine alkaloids N-methylstylopine and N-methylcanadine into protopine and allocryptopine, respectively. Can also use (S)-cis-N-methyltetrahydrothalifendine and (S)-cis-N-methyltetrahydropalmatine as substrates. This Papaver somniferum (Opium poppy) protein is Methyltetrahydroprotoberberine 14-monooxygenase.